We begin with the raw amino-acid sequence, 447 residues long: Delta(5) fatty acid desaturase fat-4 (447 aa).

The region spanning 1 to 80 (MVLREQEHEP…TQEPEIPDIK (80 aa)) is the Cytochrome b5 heme-binding domain. Helical transmembrane passes span 137–157 (IFTI…PSAI), 257–277 (WTFM…IFVS), 292–312 (IYEQ…LYFL), and 319–339 (IMFF…VVTF).

It belongs to the fatty acid desaturase type 1 family.

It is found in the membrane. It catalyses the reaction (11Z,14Z)-eicosadienoyl-CoA + 2 Fe(II)-[cytochrome b5] + O2 + 2 H(+) = (5Z,11Z,14Z)-eicosatrienoyl-CoA + 2 Fe(III)-[cytochrome b5] + 2 H2O. The enzyme catalyses (11Z,14Z,17Z)-eicosatrienoyl-CoA + 2 Fe(II)-[cytochrome b5] + O2 + 2 H(+) = (5Z,11Z,14Z,17Z)-eicosatetraenoyl-CoA + 2 Fe(III)-[cytochrome b5] + 2 H2O. It carries out the reaction (8Z,11Z,14Z,17Z)-eicosatetraenoyl-CoA + 2 Fe(II)-[cytochrome b5] + O2 + 2 H(+) = (5Z,8Z,11Z,14Z,17Z)-eicosapentaenoyl-CoA + 2 Fe(III)-[cytochrome b5] + 2 H2O. The catalysed reaction is (8Z,11Z,14Z)-eicosatrienoyl-CoA + 2 Fe(II)-[cytochrome b5] + O2 + 2 H(+) = (5Z,8Z,11Z,14Z)-eicosatetraenoyl-CoA + 2 Fe(III)-[cytochrome b5] + 2 H2O. Its pathway is lipid metabolism; polyunsaturated fatty acid biosynthesis. In terms of biological role, can function as a Delta(5) fatty acid desaturase and behaves as a (8-3) desaturase. Introduces a double bond in the fatty acid chain 5 carbons away from carboxy terminal to biosynthesize polyunsaturated fatty acids (PUFAs) endogenously (PUFAs are essential for membrane structure and many cellular and physiological processes). Acts on a variety of substrates such as dihomo-gamma-linoleoyl-CoA ((8Z,11Z,14Z)-eicosatrienoyl-CoA, 20:3n-6) to generate arachidonoyl-CoA ((5Z,8Z,11Z,14Z)-eicosatetraenoyl-CoA, 20:4n-6). Also acts on a number of other substrates, including fatty acids that do not contain a double bond at the 8 position like (11Z,14Z,17Z)-eicosatrienoyl-CoA (20:3n-3) to produce (5Z,11Z,14Z,17Z)-eicosatetraenoyl-CoA (20:4n-3). Unlike plants, Caenorhabditis elegans desaturases seem to use fatty acyl-CoAs as substrates. The polypeptide is Delta(5) fatty acid desaturase fat-4 (fat-4) (Caenorhabditis elegans).